We begin with the raw amino-acid sequence, 269 residues long: tRNA pseudouridine synthase A (269 aa).

The Nucleophile role is filled by D51. Y109 contacts substrate.

It belongs to the tRNA pseudouridine synthase TruA family. Homodimer.

It catalyses the reaction uridine(38/39/40) in tRNA = pseudouridine(38/39/40) in tRNA. Its function is as follows. Formation of pseudouridine at positions 38, 39 and 40 in the anticodon stem and loop of transfer RNAs. This is tRNA pseudouridine synthase A from Histophilus somni (strain 2336) (Haemophilus somnus).